The sequence spans 549 residues: Urocanate hydratase (549 aa).

Residues 46–47 (GG), Gln124, Glu190, Arg195, 236–237 (NA), 257–261 (QTSAH), 267–268 (YV), and Tyr316 contribute to the NAD(+) site. Cys404 is a catalytic residue. An NAD(+)-binding site is contributed by Gly486.

The protein belongs to the urocanase family. It depends on NAD(+) as a cofactor.

It is found in the cytoplasm. It catalyses the reaction 4-imidazolone-5-propanoate = trans-urocanate + H2O. The protein operates within amino-acid degradation; L-histidine degradation into L-glutamate; N-formimidoyl-L-glutamate from L-histidine: step 2/3. Functionally, catalyzes the conversion of urocanate to 4-imidazolone-5-propionate. The polypeptide is Urocanate hydratase (Thermoanaerobacter pseudethanolicus (strain ATCC 33223 / 39E) (Clostridium thermohydrosulfuricum)).